Reading from the N-terminus, the 352-residue chain is Peptide chain release factor 1 (352 aa).

An N5-methylglutamine modification is found at Gln229.

It belongs to the prokaryotic/mitochondrial release factor family. In terms of processing, methylated by PrmC. Methylation increases the termination efficiency of RF1.

The protein localises to the cytoplasm. In terms of biological role, peptide chain release factor 1 directs the termination of translation in response to the peptide chain termination codons UAG and UAA. This chain is Peptide chain release factor 1, found in Granulibacter bethesdensis (strain ATCC BAA-1260 / CGDNIH1).